A 334-amino-acid polypeptide reads, in one-letter code: Methionine import ATP-binding protein MetN (334 aa).

An ABC transporter domain is found at 7–246 (VEFRSVSKVF…PRSAPARAFV (240 aa)). 43–50 (GYSGAGKS) contacts ATP.

The protein belongs to the ABC transporter superfamily. Methionine importer (TC 3.A.1.24) family. In terms of assembly, the complex is composed of two ATP-binding proteins (MetN), two transmembrane proteins (MetI) and a solute-binding protein (MetQ).

It is found in the cell membrane. It carries out the reaction L-methionine(out) + ATP + H2O = L-methionine(in) + ADP + phosphate + H(+). The enzyme catalyses D-methionine(out) + ATP + H2O = D-methionine(in) + ADP + phosphate + H(+). Part of the ABC transporter complex MetNIQ involved in methionine import. Responsible for energy coupling to the transport system. This Nocardia farcinica (strain IFM 10152) protein is Methionine import ATP-binding protein MetN.